Here is a 496-residue protein sequence, read N- to C-terminus: Cytochrome f, chloroplastic (496 aa).

A chloroplast-targeting transit peptide spans M1–A149. Residues Y150, C170, C173, and H174 each coordinate heme. Residues V462–V481 form a helical membrane-spanning segment.

This sequence belongs to the cytochrome f family. As to quaternary structure, interacts with plastocyanin and Rieske iron-sulfur protein. Heme serves as cofactor.

It is found in the plastid. It localises to the chloroplast thylakoid membrane. Its function is as follows. Translocates protons across the thylakoid membrane and transfers electrons from photosystem II to photosystem I. It receives electrons from the Rieske iron-sulfur protein and passes them to plastocyanin. This Euglena gracilis protein is Cytochrome f, chloroplastic (petA).